Consider the following 572-residue polypeptide: Formate--tetrahydrofolate ligase (572 aa).

65-72 (TPLGEGKT) contributes to the ATP binding site.

This sequence belongs to the formate--tetrahydrofolate ligase family.

The catalysed reaction is (6S)-5,6,7,8-tetrahydrofolate + formate + ATP = (6R)-10-formyltetrahydrofolate + ADP + phosphate. It participates in one-carbon metabolism; tetrahydrofolate interconversion. The protein is Formate--tetrahydrofolate ligase of Chloroflexus aggregans (strain MD-66 / DSM 9485).